The primary structure comprises 77 residues: Delta-conotoxin GmVIA (77 aa).

A signal peptide spans Met-1–Ala-22. A propeptide spanning residues Asp-23–Arg-48 is cleaved from the precursor. Disulfide bonds link Cys-52-Cys-67, Cys-59-Cys-72, and Cys-66-Cys-76.

Belongs to the conotoxin O1 superfamily. In terms of tissue distribution, expressed by the venom duct.

Its subcellular location is the secreted. Its function is as follows. Delta-conotoxins bind to site 6 of voltage-gated sodium channels (Nav) and inhibit the inactivation process. This toxin shows weak activity on rNav1.2/SCN2A (EC(50)=2.5 uM) and rNav1.4/SCN4A (EC(50)=4.8 uM). In vivo, injection of this peptide in the head region of garden snail induces retraction of the head and body into shell. This is followed by secretion of viscous green slime and a convulsive undulation into and out of the shell. No apparent biological activity was observed when a much greater dose of peptide was injected intraperitoneally into mice. The chain is Delta-conotoxin GmVIA from Conus gloriamaris (Glory-of-the-Sea cone).